Consider the following 447-residue polypeptide: ATP-dependent protease ATPase subunit HslU (447 aa).

ATP-binding positions include I18, 60-65 (GVGKTE), D260, E325, and R397.

It belongs to the ClpX chaperone family. HslU subfamily. A double ring-shaped homohexamer of HslV is capped on each side by a ring-shaped HslU homohexamer. The assembly of the HslU/HslV complex is dependent on binding of ATP.

It is found in the cytoplasm. In terms of biological role, ATPase subunit of a proteasome-like degradation complex; this subunit has chaperone activity. The binding of ATP and its subsequent hydrolysis by HslU are essential for unfolding of protein substrates subsequently hydrolyzed by HslV. HslU recognizes the N-terminal part of its protein substrates and unfolds these before they are guided to HslV for hydrolysis. The sequence is that of ATP-dependent protease ATPase subunit HslU from Paraburkholderia phymatum (strain DSM 17167 / CIP 108236 / LMG 21445 / STM815) (Burkholderia phymatum).